Reading from the N-terminus, the 335-residue chain is Ubiquinol oxidase 1b, mitochondrial (335 aa).

Residues 1–47 constitute a mitochondrion transit peptide; it reads MSSRMAGATLLRHLGPRLFAAEPVYSGLAASARGVMPAAARIFPARM. A helical membrane pass occupies residues 160 to 180; sequence ALLLETVAGVPGMVGGMLLHL. Fe cation contacts are provided by Glu164, Glu203, and His206. A helical membrane pass occupies residues 222–242; the sequence is ALVLAAQGVFFNAYFVGYLVS. Fe cation is bound by residues Glu254, Glu305, and His308.

This sequence belongs to the alternative oxidase family. Fe cation serves as cofactor.

The protein localises to the mitochondrion inner membrane. It carries out the reaction 2 a ubiquinol + O2 = 2 a ubiquinone + 2 H2O. Catalyzes the cyanide-resistant oxidation of ubiquinol and the reduction of molecular oxygen to water, but does not translocate protons and consequently is not linked to oxidative phosphorylation. May increase respiration when the cytochrome respiratory pathway is restricted, or in response to low temperatures. This is Ubiquinol oxidase 1b, mitochondrial from Oryza sativa subsp. japonica (Rice).